The following is a 426-amino-acid chain: Serine--tRNA ligase (426 aa).

231–233 (TSE) is a binding site for L-serine. Residue 262 to 264 (RSE) participates in ATP binding. Glu285 serves as a coordination point for L-serine. An ATP-binding site is contributed by 349–352 (EISS). Ser385 is an L-serine binding site.

Belongs to the class-II aminoacyl-tRNA synthetase family. Type-1 seryl-tRNA synthetase subfamily. In terms of assembly, homodimer. The tRNA molecule binds across the dimer.

The protein resides in the cytoplasm. It catalyses the reaction tRNA(Ser) + L-serine + ATP = L-seryl-tRNA(Ser) + AMP + diphosphate + H(+). It carries out the reaction tRNA(Sec) + L-serine + ATP = L-seryl-tRNA(Sec) + AMP + diphosphate + H(+). It participates in aminoacyl-tRNA biosynthesis; selenocysteinyl-tRNA(Sec) biosynthesis; L-seryl-tRNA(Sec) from L-serine and tRNA(Sec): step 1/1. Functionally, catalyzes the attachment of serine to tRNA(Ser). Is also able to aminoacylate tRNA(Sec) with serine, to form the misacylated tRNA L-seryl-tRNA(Sec), which will be further converted into selenocysteinyl-tRNA(Sec). The sequence is that of Serine--tRNA ligase from Legionella pneumophila (strain Paris).